The chain runs to 130 residues: Glycine cleavage system H protein (130 aa).

The 83-residue stretch at Thr-28–Glu-110 folds into the Lipoyl-binding domain. Lys-69 carries the post-translational modification N6-lipoyllysine.

The protein belongs to the GcvH family. In terms of assembly, the glycine cleavage system is composed of four proteins: P, T, L and H. Requires (R)-lipoate as cofactor.

In terms of biological role, the glycine cleavage system catalyzes the degradation of glycine. The H protein shuttles the methylamine group of glycine from the P protein to the T protein. The sequence is that of Glycine cleavage system H protein from Corynebacterium aurimucosum (strain ATCC 700975 / DSM 44827 / CIP 107346 / CN-1) (Corynebacterium nigricans).